The chain runs to 146 residues: NADPH-dependent 7-cyano-7-deazaguanine reductase (146 aa).

The active-site Thioimide intermediate is the Cys-48. Catalysis depends on Asp-55, which acts as the Proton donor. Substrate contacts are provided by residues 70 to 72 (VES) and 89 to 90 (HE).

It belongs to the GTP cyclohydrolase I family. QueF type 1 subfamily.

The protein localises to the cytoplasm. The catalysed reaction is 7-aminomethyl-7-carbaguanine + 2 NADP(+) = 7-cyano-7-deazaguanine + 2 NADPH + 3 H(+). It participates in tRNA modification; tRNA-queuosine biosynthesis. Catalyzes the NADPH-dependent reduction of 7-cyano-7-deazaguanine (preQ0) to 7-aminomethyl-7-deazaguanine (preQ1). This is NADPH-dependent 7-cyano-7-deazaguanine reductase from Helicobacter pylori (strain Shi470).